Reading from the N-terminus, the 60-residue chain is Large ribosomal subunit protein bL32 (60 aa).

A compositionally biased stretch (basic residues) spans 1–23 (MAKHPVPKKKTSKARRDARRSHH). The tract at residues 1 to 30 (MAKHPVPKKKTSKARRDARRSHHALTPPTL) is disordered.

Part of the 50S ribosomal subunit.

In terms of biological role, found on the solvent side of the large subunit. The chain is Large ribosomal subunit protein bL32 (rpmF) from Thermus thermophilus (strain ATCC 27634 / DSM 579 / HB8).